The sequence spans 170 residues: Ureidoglycolate lyase (170 aa).

It belongs to the ureidoglycolate lyase family. In terms of assembly, homodimer. It depends on Ni(2+) as a cofactor.

The catalysed reaction is (S)-ureidoglycolate = urea + glyoxylate. It functions in the pathway nitrogen metabolism; (S)-allantoin degradation. Its function is as follows. Catalyzes the catabolism of the allantoin degradation intermediate (S)-ureidoglycolate, generating urea and glyoxylate. Involved in the utilization of allantoin as nitrogen source. The chain is Ureidoglycolate lyase from Pseudomonas syringae pv. syringae (strain B728a).